The following is a 509-amino-acid chain: ATP synthase subunit alpha (509 aa).

169–176 (GDRQTGKT) is a binding site for ATP.

Belongs to the ATPase alpha/beta chains family. As to quaternary structure, F-type ATPases have 2 components, CF(1) - the catalytic core - and CF(0) - the membrane proton channel. CF(1) has five subunits: alpha(3), beta(3), gamma(1), delta(1), epsilon(1). CF(0) has three main subunits: a(1), b(2) and c(9-12). The alpha and beta chains form an alternating ring which encloses part of the gamma chain. CF(1) is attached to CF(0) by a central stalk formed by the gamma and epsilon chains, while a peripheral stalk is formed by the delta and b chains.

Its subcellular location is the cell inner membrane. It catalyses the reaction ATP + H2O + 4 H(+)(in) = ADP + phosphate + 5 H(+)(out). In terms of biological role, produces ATP from ADP in the presence of a proton gradient across the membrane. The alpha chain is a regulatory subunit. The protein is ATP synthase subunit alpha of Brucella melitensis biotype 1 (strain ATCC 23456 / CCUG 17765 / NCTC 10094 / 16M).